Here is a 38-residue protein sequence, read N- to C-terminus: Photosystem II reaction center protein L (38 aa).

Residues 17-37 (SLFWGLLLIFVLAVLFSSYFF) form a helical membrane-spanning segment.

Belongs to the PsbL family. PSII is composed of 1 copy each of membrane proteins PsbA, PsbB, PsbC, PsbD, PsbE, PsbF, PsbH, PsbI, PsbJ, PsbK, PsbL, PsbM, PsbT, PsbX, PsbY, PsbZ, Psb30/Ycf12, at least 3 peripheral proteins of the oxygen-evolving complex and a large number of cofactors. It forms dimeric complexes.

Its subcellular location is the plastid. It is found in the chloroplast thylakoid membrane. One of the components of the core complex of photosystem II (PSII). PSII is a light-driven water:plastoquinone oxidoreductase that uses light energy to abstract electrons from H(2)O, generating O(2) and a proton gradient subsequently used for ATP formation. It consists of a core antenna complex that captures photons, and an electron transfer chain that converts photonic excitation into a charge separation. This subunit is found at the monomer-monomer interface and is required for correct PSII assembly and/or dimerization. This Zygnema circumcarinatum (Green alga) protein is Photosystem II reaction center protein L.